Consider the following 1188-residue polypeptide: Probable RNA helicase armi (1188 aa).

723-730 (GPPGSGKT) is a binding site for ATP. Positions 862–865 (DEAG) match the DEAG box motif.

The protein belongs to the DNA2/NAM7 helicase family. SDE3 subfamily. As to quaternary structure, forms a complex with piwi and fs(1)Yb; this interaction is required for proper piRNA loading and nuclear localization of piwi. The interaction of piwi and fs(1)Yb is likely to occur via armi. In terms of tissue distribution, abundant in oocytes and syncytial blastoderm. Expressed at low level throughout development, including somatic tissues. First apparent early in oogenesis, in the cytoplasm of stem cells and mitotically dividing cystoblasts. In regions 2a and 2b of the germarium, it is most concentrated in the center of the germline cysts, where the pro-oocyte is located. In stage 1 and early stage 2 egg chambers, it accumulates at the anterior of the oocyte, near the ring canals. It also extends through the ring canals forming a branched structure that links the early oocyte with adjacent nurse cells. In stage 3 cysts, it accumulates at the posterior cortex and localizes to extensions that pass through the oocyte into the nurse cells. Through stages 4 to 7, it continues to be somewhat enriched at the posterior cortex of the oocyte, but at significantly lower level. In stage 9 to 10 egg chambers, it is found throughout the cytoplasm of the oocyte and nurse cells, with slight enrichment at the oocyte cortex.

The protein resides in the cytoplasm. It catalyses the reaction ATP + H2O = ADP + phosphate + H(+). Functionally, probable RNA helicase required for axial polarization of the oocyte during early and mid oogenesis. Plays a central role in RNA interference (RNAi) process, a process that mediates mRNA destruction of translational repression. Required for the assembly of the RISC complex, a complex required for target RNA destruction or repression. May be required in the RISC assembly to unwind miRNAs, in the production of single-stranded miRNA from the double-stranded miRNA, a key step in RISC formation. Required both for the translational control of oskar (osk) mRNA and cytoskeletal polarization in the oocyte. Required for somatic primary piRNA biogenesis. Involved in repression of long interspersed nuclear elements (LINEs) including HeT-A, I-element and TART LINEs. This Drosophila melanogaster (Fruit fly) protein is Probable RNA helicase armi.